The primary structure comprises 411 residues: 2,3-bisphosphoglycerate-independent phosphoglycerate mutase (411 aa).

Belongs to the BPG-independent phosphoglycerate mutase family. A-PGAM subfamily.

It carries out the reaction (2R)-2-phosphoglycerate = (2R)-3-phosphoglycerate. Its pathway is carbohydrate degradation; glycolysis; pyruvate from D-glyceraldehyde 3-phosphate: step 3/5. Functionally, catalyzes the interconversion of 2-phosphoglycerate and 3-phosphoglycerate. The polypeptide is 2,3-bisphosphoglycerate-independent phosphoglycerate mutase (Pyrobaculum aerophilum (strain ATCC 51768 / DSM 7523 / JCM 9630 / CIP 104966 / NBRC 100827 / IM2)).